Consider the following 56-residue polypeptide: MVKIDYKKCGYCGACVGVCEKLAINLIEHIIVIDEKKCNNCKLCTIVCPLNALEGE.

4Fe-4S ferredoxin-type domains follow at residues 2 to 28 and 29 to 56; these read VKID…NLIE and HIIV…LEGE. The [4Fe-4S] cluster site is built by Cys9, Cys12, Cys15, Cys19, Cys38, Cys41, Cys44, and Cys48.

The cofactor is [4Fe-4S] cluster.

Its function is as follows. Ferredoxins are iron-sulfur proteins that transfer electrons in a wide variety of metabolic reactions. This is an uncharacterized protein from Methanocaldococcus jannaschii (strain ATCC 43067 / DSM 2661 / JAL-1 / JCM 10045 / NBRC 100440) (Methanococcus jannaschii).